Consider the following 271-residue polypeptide: 5-deoxy-glucuronate isomerase (271 aa).

It belongs to the isomerase IolB family.

The catalysed reaction is 5-deoxy-D-glucuronate = 5-dehydro-2-deoxy-D-gluconate. It participates in polyol metabolism; myo-inositol degradation into acetyl-CoA; acetyl-CoA from myo-inositol: step 4/7. Its function is as follows. Involved in the isomerization of 5-deoxy-glucuronate (5DG) to 5-dehydro-2-deoxy-D-gluconate (DKG or 2-deoxy-5-keto-D-gluconate). The sequence is that of 5-deoxy-glucuronate isomerase from Bacillus velezensis (strain DSM 23117 / BGSC 10A6 / LMG 26770 / FZB42) (Bacillus amyloliquefaciens subsp. plantarum).